The chain runs to 147 residues: Peroxynitrite isomerase (147 aa).

His137 contributes to the heme b binding site.

This sequence belongs to the nitrobindin family. Homodimer. The cofactor is heme b.

The catalysed reaction is peroxynitrite = nitrate. The protein operates within nitrogen metabolism. Heme-binding protein able to scavenge peroxynitrite and to protect free L-tyrosine against peroxynitrite-mediated nitration, by acting as a peroxynitrite isomerase that converts peroxynitrite to nitrate. Therefore, this protein likely plays a role in peroxynitrite sensing and in the detoxification of reactive nitrogen and oxygen species (RNS and ROS, respectively). Is able to bind nitric oxide (NO) in vitro, but may act as a sensor of peroxynitrite levels in vivo. The chain is Peroxynitrite isomerase from Frankia alni (strain DSM 45986 / CECT 9034 / ACN14a).